A 692-amino-acid chain; its full sequence is Eomesodermin (692 aa).

The interval 35 to 135 is disordered; the sequence is NSSTPNLPHT…LNTAVPTSAP (101 aa). The T-box DNA-binding region spans 263–443; that stretch reads LWLKFHRHQT…HNPFAKGFRD (181 aa). Positions 578–692 are required for transcription activation; that stretch reads SMAGWGSRGS…LGYYSFYSSS (115 aa). 2 disordered regions span residues 595 to 614 and 621 to 673; these read TSLP…DLLP and EMSS…DIGT. 2 stretches are compositionally biased toward low complexity: residues 596–609 and 654–665; these read SLPW…SGFS and SPSTSSNENSPP.

The protein resides in the nucleus. Its function is as follows. Functions as a transcriptional activator playing a crucial role during development. Functions in gastrulation, regulating mesoderm differentiation. Activates wnt8, t/bra, chrd and mix-A/mix.1 expression. This Xenopus laevis (African clawed frog) protein is Eomesodermin (eomes).